A 380-amino-acid chain; its full sequence is Probable inactive reductase easA (380 aa).

FMN is bound by residues 25–27 (PMT), Ala60, Gln102, and His171. Substrate is bound by residues His171 and Asn174. FMN contacts are provided by residues Lys223, Gly299, 324 to 325 (GR), and Arg325. Substrate is bound at residue Tyr352.

Belongs to the NADH:flavin oxidoreductase/NADH oxidase family.

Functionally, probable inactive dehydrogenase; part of the gene cluster that mediates the biosynthesis of fungal ergot alkaloid ergovaline, the predominant ergopeptine product in E.festucae var. lolii. DmaW catalyzes the first step of ergot alkaloid biosynthesis by condensing dimethylallyl diphosphate (DMAP) and tryptophan to form 4-dimethylallyl-L-tryptophan. The second step is catalyzed by the methyltransferase easF that methylates 4-dimethylallyl-L-tryptophan in the presence of S-adenosyl-L-methionine, resulting in the formation of 4-dimethylallyl-L-abrine. The catalase easC and the FAD-dependent oxidoreductase easE then transform 4-dimethylallyl-L-abrine to chanoclavine-I which is further oxidized by easD in the presence of NAD(+), resulting in the formation of chanoclavine-I aldehyde. Agroclavine dehydrogenase easG then mediates the conversion of chanoclavine-I aldehyde to agroclavine via a non-enzymatic adduct reaction: the substrate is an iminium intermediate that is formed spontaneously from chanoclavine-I aldehyde in the presence of glutathione. The presence of easA is not required to complete this reaction. Further conversion of agroclavine to paspalic acid is a two-step process involving oxidation of agroclavine to elymoclavine and of elymoclavine to paspalic acid, the second step being performed by the elymoclavine oxidase cloA. Paspalic acid is then further converted to D-lysergic acid. Ergovaline is assembled from D-lysergic acid and three different amino acids by the D-lysergyl-peptide-synthetase composed of a monomudular (lpsB) and a trimodular (lpsA) nonribosomal peptide synthetase subunit. This is Probable inactive reductase easA from Epichloe festucae var. lolii (Neotyphodium lolii).